The sequence spans 186 residues: Ribosome-recycling factor (186 aa).

Belongs to the RRF family.

It localises to the cytoplasm. Responsible for the release of ribosomes from messenger RNA at the termination of protein biosynthesis. May increase the efficiency of translation by recycling ribosomes from one round of translation to another. The sequence is that of Ribosome-recycling factor from Azorhizobium caulinodans (strain ATCC 43989 / DSM 5975 / JCM 20966 / LMG 6465 / NBRC 14845 / NCIMB 13405 / ORS 571).